The following is a 299-amino-acid chain: MLEVVLQVLSISAITTTIALFFCGIPICMQIRRQGAVGDISGVPFLMGVLGGSFWLRYGLLKMDYVMIIVNVVGVACMAFYCVFFLIYSLPKKTFTCQLILVTSTIGGMVLWIALKPNLDYLGVICMTFNIMNFGAPLAGLGVVLKNREVSTLPLPMCVANFLVSSQWCLYGNLVSDIYIIIPNGIGMFLAIVQLALFVVLPIRENEKSPLEKLASWFTGRDSKVKDLERGDCIVSSPPSSPQKVPNETRSDVEDKFDKLMAETSSTIPSDSRRGSMGSPPSYKSRSSSDPDLSSIQSP.

The region spanning 7 to 91 (QVLSISAITT…CVFFLIYSLP (85 aa)) is the MtN3/slv 1 domain. Transmembrane regions (helical) follow at residues 8-28 (VLSISAITTTIALFFCGIPIC), 36-56 (AVGDISGVPFLMGVLGGSFWL), 67-87 (MIIVNVVGVACMAFYCVFFLI), 95-115 (FTCQLILVTSTIGGMVLWIAL), 124-144 (VICMTFNIMNFGAPLAGLGVV), 155-175 (LPMCVANFLVSSQWCLYGNLV), and 180-200 (IIIPNGIGMFLAIVQLALFVV). The MtN3/slv 2 domain maps to 121–205 (YLGVICMTFN…ALFVVLPIRE (85 aa)). The interval 230–299 (RGDCIVSSPP…DPDLSSIQSP (70 aa)) is disordered. Residues 247-261 (NETRSDVEDKFDKLM) are compositionally biased toward basic and acidic residues. The span at 276 to 299 (SMGSPPSYKSRSSSDPDLSSIQSP) shows a compositional bias: low complexity.

Belongs to the SWEET sugar transporter family.

It is found in the golgi apparatus membrane. Its subcellular location is the cell membrane. Mediates both low-affinity uptake and efflux of sugar across the membrane. The protein is Sugar transporter SWEET1 (swt-1) of Caenorhabditis elegans.